Consider the following 541-residue polypeptide: Membrane protein insertase YidC (541 aa).

6 helical membrane passes run 6–26 (NILL…WQAD), 325–345 (LVVD…LLMF), 349–369 (FVGN…GLLF), 420–440 (GGCL…WVLL), 457–477 (LSVQ…MFVM), and 500–520 (VIFT…WLVG).

Belongs to the OXA1/ALB3/YidC family. Type 1 subfamily. In terms of assembly, interacts with the Sec translocase complex via SecD. Specifically interacts with transmembrane segments of nascent integral membrane proteins during membrane integration.

It localises to the cell inner membrane. Its function is as follows. Required for the insertion and/or proper folding and/or complex formation of integral membrane proteins into the membrane. Involved in integration of membrane proteins that insert both dependently and independently of the Sec translocase complex, as well as at least some lipoproteins. Aids folding of multispanning membrane proteins. The sequence is that of Membrane protein insertase YidC from Shewanella baltica (strain OS195).